The primary structure comprises 226 residues: V-type proton ATPase subunit E (226 aa).

It belongs to the V-ATPase E subunit family. In terms of assembly, V-ATPase is a heteromultimeric enzyme made up of two complexes: the ATP-hydrolytic V1 complex and the proton translocation V0 complex. The V1 complex consists of three catalytic AB heterodimers that form a heterohexamer, three peripheral stalks each consisting of EG heterodimers, one central rotor including subunits D and F, and the regulatory subunits C and H. The proton translocation complex V0 consists of the proton transport subunit a, a ring of proteolipid subunits c9c'', rotary subunit d, subunits e and f, and the accessory subunits VhaAC45 and ATP6AP2.

Subunit of the V1 complex of vacuolar(H+)-ATPase (V-ATPase), a multisubunit enzyme composed of a peripheral complex (V1) that hydrolyzes ATP and a membrane integral complex (V0) that translocates protons. V-ATPase is responsible for acidifying and maintaining the pH of intracellular compartments and in some cell types, is targeted to the plasma membrane, where it is responsible for acidifying the extracellular environment. The sequence is that of V-type proton ATPase subunit E (Vha26) from Drosophila melanogaster (Fruit fly).